The primary structure comprises 285 residues: MIINHNMSSMYANRMLGINNDQVQGNIEKLSSGQRINRAGDDASGLAVSEKMRMQIRGLNQAQKNIQNGVSFIQATEGYLQETTDILGRIRELSIQSANGIYSDEDRMQIQVEVSQLIDEVDRIASSAQFNGMNMLTGAFAANSVSGRIMQFHIGANVDQNARVYIGTMTAQSLGLVGTQGDAFAKLSIASPESANMAIATLDSALTSVNKQRADLGAYQNRFEMAAKGIGIASENLQAAESIIRDTDMASEIVDYTKNQILTQSSVAMLAQANTQAQNVLPLLS.

Belongs to the bacterial flagellin family. As to quaternary structure, the core of the flagellum consists of several antigenically related polypeptides. Glycosylated. Glycosylation is not essential for motility.

It is found in the periplasmic flagellum. Its subcellular location is the periplasm. Functionally, component of the core of the flagella. The chain is Flagellar filament 30.7 kDa core protein (flaB3) from Treponema maltophilum.